Reading from the N-terminus, the 558-residue chain is Atlastin-1 (558 aa).

The segment at 1 to 28 (MAKNRRDRNSWGGFSEKTYEWSSEEEEP) is disordered. Residues 1–34 (MAKNRRDRNSWGGFSEKTYEWSSEEEEPVKKAGP) are N-terminal hypervariable region (HVR). At 1-449 (MAKNRRDRNS…NIFHAARTPA (449 aa)) the chain is on the cytoplasmic side. Residues Ser-10, Ser-22, and Ser-23 each carry the phosphoserine modification. One can recognise a GB1/RHD3-type G domain in the interval 64–309 (DKEVVAVSVA…LIPWLLSPES (246 aa)). Arg-77, Lys-78, Gly-79, Lys-80, Ser-81, Phe-82, Gln-148, Arg-217, Asp-218, Val-276, and Asn-279 together coordinate GDP. GTP is bound by residues Arg-77, Lys-78, Gly-79, Lys-80, Ser-81, and Phe-82. Ser-81 serves as a coordination point for Mg(2+). GTP-binding residues include Arg-217, Asp-218, and Val-276. Residues 347–438 (MLQATAEANN…YIQYIKHNDS (92 aa)) are 3HB (three-helix bundle) domain. Lys-395 is subject to N6-acetyllysine. Residues 418 to 439 (LQQLETEIDELYIQYIKHNDSK) are a coiled coil. Residues 439-447 (KNIFHAART) are linker. Residues 450-470 (TLFVVIFITYVIAGVTGFIGL) traverse the membrane as a helical segment. A topological domain (lumenal) is located at residue Asp-471. The helical transmembrane segment at 472–492 (IIASLCNMIMGLTLITLCTWA) threads the bilayer. The Cytoplasmic portion of the chain corresponds to 493–558 (YIRYSGEYRE…STEQSEKKKM (66 aa)). Residues 521-558 (NEALYKLYSAAATHRHLYHQAFPAPKSESTEQSEKKKM) are autoinhibitory domain.

This sequence belongs to the TRAFAC class dynamin-like GTPase superfamily. GB1/RHD3 GTPase family. GB1 subfamily. Monomeric and homodimeric. The homodimer, transiently formed by two molecules on opposing membranes, is the active form mediating ER membrane fusion. Interacts with REEP1, REEP5, RTN3 and RTN4 (via the transmembrane region); these proteins are involved in endoplasmic reticulum tubular network organization. Interacts with ZFYVE27; both proteins are involved in endoplasmic reticulum tubular network organization. Interacts with ARL6IP1; both proteins are involved in endoplasmic reticulum tubular network organization. Interacts with SPAST; the interaction is direct, could recruit SPAST to Golgi membranes. Interacts (via N-terminal region) with MAP4K4 (via CNH regulatory domain). May interact with TMED2. Interacts with CPT1C. In terms of processing, phosphorylated. Phosphorylation, by different kinases, of the N-terminal hypervariable region (HVR) regulates the ATL1-mediated membrane tethering step.

The protein resides in the endoplasmic reticulum membrane. The protein localises to the golgi apparatus membrane. It localises to the cell projection. Its subcellular location is the axon. The enzyme catalyses GTP + H2O = GDP + phosphate + H(+). Its function is as follows. Atlastin-1 (ATL1) is a membrane-anchored GTPase that mediates the GTP-dependent fusion of endoplasmic reticulum (ER) membranes, maintaining the continuous ER network. It facilitates the formation of three-way junctions where ER tubules intersect. Two atlastin-1 on neighboring ER tubules bind GTP and form loose homodimers through the GB1/RHD3-type G domains and 3HB regions. Upon GTP hydrolysis, the 3HB regions tighten, pulling the membranes together to drive their fusion. After fusion, the homodimer disassembles upon release of inorganic phosphate (Pi). Subsequently, GDP dissociates, resetting the monomers to a conformation ready for a new fusion cycle. May also regulate more or less directly Golgi biogenesis. Indirectly regulates axonal development. The chain is Atlastin-1 from Bos taurus (Bovine).